Reading from the N-terminus, the 321-residue chain is Glucokinase (321 aa).

8 to 13 (ADIGGT) contributes to the ATP binding site.

This sequence belongs to the bacterial glucokinase family.

The protein localises to the cytoplasm. The enzyme catalyses D-glucose + ATP = D-glucose 6-phosphate + ADP + H(+). The chain is Glucokinase from Paramagnetospirillum magneticum (strain ATCC 700264 / AMB-1) (Magnetospirillum magneticum).